Reading from the N-terminus, the 1024-residue chain is Multidrug resistance protein MdtC (1024 aa).

12 helical membrane passes run 3–23, 333–353, 360–380, 387–407, 431–451, 463–483, 528–548, 853–873, 875–895, 897–917, 953–973, and 984–1004; these read FLSL…ALVL, EVEQ…FAFL, LIPA…MYLC, LSLM…IVVL, VGFT…PLLM, FAIT…TLTP, WALL…ISMP, LWLI…LYES, VHPL…LLAL, LFNT…IGIV, PIIM…LSSG, and ITIV…TPVV.

The protein belongs to the resistance-nodulation-cell division (RND) (TC 2.A.6) family. MdtC subfamily. Part of a tripartite efflux system composed of MdtA, MdtB and MdtC. MdtC forms a heteromultimer with MdtB.

The protein localises to the cell inner membrane. The polypeptide is Multidrug resistance protein MdtC (Erwinia amylovora (strain ATCC 49946 / CCPPB 0273 / Ea273 / 27-3)).